The primary structure comprises 233 residues: Protein TIPIN homolog (233 aa).

A compositionally biased stretch (acidic residues) spans 1–14 (MDEMEDFFENDELD). 2 disordered regions span residues 1–39 (MDEM…RVVE) and 134–233 (GETG…NNDW). Basic and acidic residues-rich tracts occupy residues 163-190 (DLFK…KTAE) and 197-216 (EEYR…AKEA). A compositionally biased stretch (acidic residues) spans 217-227 (ADEDALMEDFG).

It belongs to the CSM3 family.

The protein localises to the cytoplasm. The protein resides in the nucleus. Its function is as follows. Required for normal progression of S-phase. Important for cell survival after DNA damage or replication stress. In Caenorhabditis elegans, this protein is Protein TIPIN homolog.